The chain runs to 118 residues: MIPGELRVNDDLGQIELNVGRTTQTLSVANYGDRPIQVGSHYHFYEVNEALHFEREPTKGFRLNIPAGMAIRFEPGQRRTIELVEFAGKREIYGFQAAIMGNVDGHITATISDDKEVK.

The protein belongs to the urease beta subunit family. As to quaternary structure, heterotrimer of UreA (gamma), UreB (beta) and UreC (alpha) subunits. Three heterotrimers associate to form the active enzyme.

It localises to the cytoplasm. The catalysed reaction is urea + 2 H2O + H(+) = hydrogencarbonate + 2 NH4(+). The protein operates within nitrogen metabolism; urea degradation; CO(2) and NH(3) from urea (urease route): step 1/1. The sequence is that of Urease subunit beta from Aliivibrio fischeri (strain MJ11) (Vibrio fischeri).